Reading from the N-terminus, the 232-residue chain is MGQKVHPNGIRLGIVKPWNSTWYANTKEFADNLDSDFKVRQFLTKELSKASVSRLVIERPAKSIRVTIHTARPGIVIGKKGEDVEKLRKVVADIAGVPAQINIAEVRKPELDAKLVADSISSQLERRVMFRRAMKRAVQNAMRLGAKGIKVEVSGRLGGAEIARTEWYREGRVPLHTLRADIDYNTSEAHTTYGVIGVKVWIFKGEILGGMAAVEQPEPAAQPKKQQRKGRK.

One can recognise a KH type-2 domain in the interval 39 to 107; that stretch reads VRQFLTKELS…PAQINIAEVR (69 aa).

Belongs to the universal ribosomal protein uS3 family. In terms of assembly, part of the 30S ribosomal subunit. Forms a tight complex with proteins S10 and S14.

In terms of biological role, binds the lower part of the 30S subunit head. Binds mRNA in the 70S ribosome, positioning it for translation. This is Small ribosomal subunit protein uS3 from Sodalis glossinidius (strain morsitans).